We begin with the raw amino-acid sequence, 182 residues long: MRWLDKFGESLSRSVAHKTSRRSVLRSVGKLMVGSAFVLPVLPVARAAGGGGSSSGADHISLNPDLANEDEVNSCDYWRHCAVDGFLCSCCGGTTTTCPPGSTPSPISWIGTCHNPHDGKDYLISYHDCCGKTACGRCQCNTQTRERPGYEFFLHNDVNWCMANENSTFHCTTSVLVGLAKN.

The segment at residues 1–47 (MRWLDKFGESLSRSVAHKTSRRSVLRSVGKLMVGSAFVLPVLPVARA) is a signal peptide (tat-type signal). 7 cysteine pairs are disulfide-bonded: Cys-75–Cys-140, Cys-81–Cys-113, Cys-88–Cys-171, Cys-90–Cys-138, Cys-91–Cys-135, Cys-98–Cys-129, and Cys-130–Cys-161. Asp-84 provides a ligand contact to substrate. The active-site Tryptophylquinone 6'-substrate hemiaminal intermediate is Trp-109. Trp-109 carries the tryptophylquinone modification. The tryptophan tryptophylquinone (Trp-Trp) cross-link spans 109-160 (WIGTCHNPHDGKDYLISYHDCCGKTACGRCQCNTQTRERPGYEFFLHNDVNW). Asp-128 (proton acceptor) is an active-site residue. 156-158 (NDV) is a substrate binding site.

Belongs to the aromatic amine dehydrogenase light chain family. In terms of assembly, heterotetramer of two light and two heavy chains. Binds two azurin molecules per heterotetramer. It depends on tryptophan tryptophylquinone residue as a cofactor. In terms of processing, tryptophan tryptophylquinone (TTQ) is formed by oxidation of the indole ring of a tryptophan to form tryptophylquinone followed by covalent cross-linking with another tryptophan residue. Predicted to be exported by the Tat system. The position of the signal peptide cleavage has been experimentally proven.

The protein resides in the periplasm. It carries out the reaction an aralkylamine + 2 oxidized [azurin] + H2O = an aromatic aldehyde + 2 reduced [azurin] + NH4(+) + 2 H(+). Irreversibly inhibited by phenylhydrazine, hydroxylamine, semicarbazide, hydrazine and aminoguanidine. Reversibly inhibited by isonicotinic acid hydrazide (isoniazid) and isonicotinic acid 2-isopropyl hydrazide (iproniazid). Its function is as follows. Oxidizes primary aromatic amines and, more slowly, some long-chain aliphatic amines, but not methylamine or ethylamine. Uses azurin as an electron acceptor to transfer electrons from the reduced tryptophylquinone cofactor. This is Aralkylamine dehydrogenase light chain from Alcaligenes faecalis.